The following is a 544-amino-acid chain: Membrane protein insertase YidC (544 aa).

Helical transmembrane passes span 15–35, 321–341, 343–363, 409–429, and 506–526; these read LFLIGLFMLINDIFSSIMLSF, LWYLIQVPMQMVMQVFYDVIP, WGLSIIFLTIVVRILIFPLTF, LGGCFPVILQLPIFFALYSLV, and MPIMFFFILYNMPSGLLIYWI.

The protein belongs to the OXA1/ALB3/YidC family. Type 1 subfamily. As to quaternary structure, interacts with the Sec translocase complex via SecD. Specifically interacts with transmembrane segments of nascent integral membrane proteins during membrane integration.

It is found in the cell inner membrane. Its function is as follows. Required for the insertion and/or proper folding and/or complex formation of integral membrane proteins into the membrane. Involved in integration of membrane proteins that insert both dependently and independently of the Sec translocase complex, as well as at least some lipoproteins. Aids folding of multispanning membrane proteins. The protein is Membrane protein insertase YidC of Borrelia garinii subsp. bavariensis (strain ATCC BAA-2496 / DSM 23469 / PBi) (Borreliella bavariensis).